Reading from the N-terminus, the 227-residue chain is Probable GTP-binding protein EngB (227 aa).

In terms of domain architecture, EngB-type G spans 30–219 (KKPQIIVVGR…MVKINKNVNE (190 aa)). Residues 38 to 45 (GRSNVGKS), 63 to 67 (GVTLK), 80 to 83 (DLPG), 160 to 163 (NKMD), and 197 to 199 (IGI) contribute to the GTP site. 2 residues coordinate Mg(2+): Ser-45 and Thr-65.

Belongs to the TRAFAC class TrmE-Era-EngA-EngB-Septin-like GTPase superfamily. EngB GTPase family. Requires Mg(2+) as cofactor.

In terms of biological role, necessary for normal cell division and for the maintenance of normal septation. This is Probable GTP-binding protein EngB from Methanococcus aeolicus (strain ATCC BAA-1280 / DSM 17508 / OCM 812 / Nankai-3).